A 64-amino-acid polypeptide reads, in one-letter code: Large ribosomal subunit protein bL33 (64 aa).

Residues 16 to 25 (EARTSSEPRR) show a composition bias toward basic and acidic residues. Positions 16–39 (EARTSSEPRRSNGISRYTTEKNKR) are disordered.

Belongs to the bacterial ribosomal protein bL33 family.

The polypeptide is Large ribosomal subunit protein bL33 (Prochlorococcus marinus (strain MIT 9515)).